The chain runs to 91 residues: Small ribosomal subunit protein bS20 (91 aa).

Residues 1–23 (MANTSSAKKATRKIARRTEVNKA) are disordered.

It belongs to the bacterial ribosomal protein bS20 family.

Functionally, binds directly to 16S ribosomal RNA. The polypeptide is Small ribosomal subunit protein bS20 (Rhizobium rhizogenes (strain K84 / ATCC BAA-868) (Agrobacterium radiobacter)).